Reading from the N-terminus, the 499-residue chain is Pyruvate kinase 1 (499 aa).

Arg50 is a substrate binding site. Residues Asn52, Ser54, Asp84, and Thr85 each coordinate K(+). 52-55 is a binding site for ATP; sequence NFSH. ATP is bound at residue Arg91. Glu241 serves as a coordination point for Mg(2+). 3 residues coordinate substrate: Gly264, Asp265, and Thr297. Asp265 lines the Mg(2+) pocket.

Belongs to the pyruvate kinase family. As to quaternary structure, homotetramer. The cofactor is Mg(2+). Requires K(+) as cofactor.

The catalysed reaction is pyruvate + ATP = phosphoenolpyruvate + ADP + H(+). It participates in carbohydrate degradation; glycolysis; pyruvate from D-glyceraldehyde 3-phosphate: step 5/5. With respect to regulation, activated by fructose 2,6-bisphosphate, activated by the effector in a cooperative manner. This is Pyruvate kinase 1 (PYK1) from Trypanosoma brucei brucei.